Consider the following 339-residue polypeptide: Ketol-acid reductoisomerase (NADP(+)) (339 aa).

A KARI N-terminal Rossmann domain is found at methionine 1 to threonine 182. NADP(+)-binding positions include tyrosine 24 to glutamine 27, arginine 48, serine 51, threonine 53, and aspartate 83 to glutamine 86. Histidine 108 is an active-site residue. Residue glycine 134 coordinates NADP(+). The 146-residue stretch at asparagine 183–isoleucine 328 folds into the KARI C-terminal knotted domain. 4 residues coordinate Mg(2+): aspartate 191, glutamate 195, glutamate 227, and glutamate 231. Serine 252 serves as a coordination point for substrate.

Belongs to the ketol-acid reductoisomerase family. Mg(2+) is required as a cofactor.

It carries out the reaction (2R)-2,3-dihydroxy-3-methylbutanoate + NADP(+) = (2S)-2-acetolactate + NADPH + H(+). The enzyme catalyses (2R,3R)-2,3-dihydroxy-3-methylpentanoate + NADP(+) = (S)-2-ethyl-2-hydroxy-3-oxobutanoate + NADPH + H(+). It functions in the pathway amino-acid biosynthesis; L-isoleucine biosynthesis; L-isoleucine from 2-oxobutanoate: step 2/4. The protein operates within amino-acid biosynthesis; L-valine biosynthesis; L-valine from pyruvate: step 2/4. Its function is as follows. Involved in the biosynthesis of branched-chain amino acids (BCAA). Catalyzes an alkyl-migration followed by a ketol-acid reduction of (S)-2-acetolactate (S2AL) to yield (R)-2,3-dihydroxy-isovalerate. In the isomerase reaction, S2AL is rearranged via a Mg-dependent methyl migration to produce 3-hydroxy-3-methyl-2-ketobutyrate (HMKB). In the reductase reaction, this 2-ketoacid undergoes a metal-dependent reduction by NADPH to yield (R)-2,3-dihydroxy-isovalerate. This chain is Ketol-acid reductoisomerase (NADP(+)), found in Phenylobacterium zucineum (strain HLK1).